Consider the following 499-residue polypeptide: Putative DUF21 domain-containing protein At1g03270 (499 aa).

The Extracellular segment spans residues 1–32 (MVVLSTLALVRAAYSLNSFVFEAEDIRFGSPW). Residues 29–211 (GSPWWFVVVG…GKGGELTHEE (183 aa)) enclose the CNNM transmembrane domain. The helical transmembrane segment at 33-53 (WFVVVGVACFLVLFAGIMSGL) threads the bilayer. Topologically, residues 54–91 (TLGLMSLGLVELEILQQSGSSAEKKQAAAILPVVKKQH) are cytoplasmic. The helical transmembrane segment at 92 to 112 (QLLVTLLLCNAAAMEALPICL) threads the bilayer. Residues 113–114 (DK) are Extracellular-facing. Residues 115-135 (IFHPFVAVLLSVTFVLAFGEI) form a helical membrane-spanning segment. Residues 136 to 145 (IPQAICSRYG) are Cytoplasmic-facing. Residues 146–166 (LAVGANFLWLVRILMIICYPI) form a helical membrane-spanning segment. Residues 167 to 499 (AYPIGKVLDA…TEPLLAESDR (333 aa)) are Extracellular-facing. N-linked (GlcNAc...) asparagine glycosylation is present at Asn-181. CBS domains lie at 230–291 (MTPI…EAPV), 295–359 (SIRK…SNLT), and 365–431 (HESH…IVDE). N-linked (GlcNAc...) asparagine glycans are attached at residues Asn-357, Asn-391, and Asn-484.

It is found in the membrane. This Arabidopsis thaliana (Mouse-ear cress) protein is Putative DUF21 domain-containing protein At1g03270 (CBSDUF4).